Consider the following 379-residue polypeptide: Protein RecA (379 aa).

ATP is bound at residue 79 to 86 (GPESSGKT).

It belongs to the RecA family.

The protein localises to the cytoplasm. Its function is as follows. Can catalyze the hydrolysis of ATP in the presence of single-stranded DNA, the ATP-dependent uptake of single-stranded DNA by duplex DNA, and the ATP-dependent hybridization of homologous single-stranded DNAs. It interacts with LexA causing its activation and leading to its autocatalytic cleavage. The polypeptide is Protein RecA (Streptococcus agalactiae serotype III (strain NEM316)).